The chain runs to 381 residues: Layilin (381 aa).

Residues 1-24 (MQPGAALQAMLLAVLLAKPRDSKG) form the signal peptide. Over 25–235 (RLLSASDLDP…ERREAALNLA (211 aa)) the chain is Extracellular. The region spanning 45–185 (TRRPCYKVIY…CNMKNNFICK (141 aa)) is the C-type lectin domain. Cystine bridges form between Cys-71-Cys-184 and Cys-150-Cys-176. Asn-117 carries N-linked (GlcNAc...) asparagine glycosylation. A helical transmembrane segment spans residues 236–256 (YILIPSIPLFLLLVVTSAVCW). The Cytoplasmic portion of the chain corresponds to 257 to 381 (VWICRRKREQ…SGWVENEIYY (125 aa)). 2 positions are modified to phosphoserine: Ser-286 and Ser-299. The interval 330 to 374 (DYENIAVNPSESGFVTLASMESGFVTNDIYEFSPDRMGRSKESGW) is interaction with NF2. Residues 337 to 381 (NPSESGFVTLASMESGFVTNDIYEFSPDRMGRSKESGWVENEIYY) form an interaction with TLN1 region. A run of 5 repeats spans residues 340–344 (ESGFV), 350–354 (ESGFV), 356–359 (NDIY), 371–375 (ESGWV), and 377–380 (NEIY). The 3 X 5 AA repeats of E-S-G-X-V stretch occupies residues 340–375 (ESGFVTLASMESGFVTNDIYEFSPDRMGRSKESGWV). Residues 356–380 (NDIYEFSPDRMGRSKESGWVENEIY) are 2 X 4 AA repeats of N-X-I-Y.

Interacts with TLN1. Interacts with NF2 and RDX.

The protein resides in the membrane. Receptor for hyaluronate. The polypeptide is Layilin (Layn) (Mus musculus (Mouse)).